We begin with the raw amino-acid sequence, 438 residues long: EF-hand calcium-binding domain-containing protein 3 (438 aa).

2 EF-hand domains span residues 47-82 (SQMA…LGMN) and 83-118 (LTKH…KNLF). Residues Asp-96, Asp-98, Asp-100, Lys-102, and Asp-107 each coordinate Ca(2+). The residue at position 279 (Tyr-279) is a Phosphotyrosine. The span at 405-415 (SSHNSRSSSSS) shows a compositional bias: low complexity. Residues 405–438 (SSHNSRSSSSSDTSECYTDSGRKRKRKGLKGFQQ) form a disordered region. Residues 426–438 (RKRKRKGLKGFQQ) are compositionally biased toward basic residues.

This chain is EF-hand calcium-binding domain-containing protein 3 (EFCAB3), found in Homo sapiens (Human).